The following is a 316-amino-acid chain: Melanocyte-stimulating hormone receptor (316 aa).

Over 1–37 (MPMQGAQRKLLGSLNSTPTATSNLGLAANHTGAPCLE) the chain is Extracellular. A glycan (N-linked (GlcNAc...) asparagine) is linked at Asn29. A helical membrane pass occupies residues 38–63 (VSIPDGLFLSLGLVSLVENVLVVAAI). The Cytoplasmic portion of the chain corresponds to 64-72 (AKNRNLHSS). A helical membrane pass occupies residues 73–93 (MYCFICCLALSDLLVSGSNML). The Extracellular portion of the chain corresponds to 94–118 (ETAVILLLETGALATRTSVVQQLHN). A helical membrane pass occupies residues 119–140 (TINVLTCSSMLCSLCFLGAIAV). Topologically, residues 141–163 (DRYISIFYALRYHSIMTLPRAQR) are cytoplasmic. A helical membrane pass occupies residues 164-183 (AIAAIWVASVLSSTLFITYY). Residues 184-191 (DHAAVLLC) are Extracellular-facing. A helical transmembrane segment spans residues 192–211 (LVVFFLAMLVLMAVLYVHML). The Cytoplasmic segment spans residues 212–240 (ARACQHAHGIIRLHKRQTPAHQAFGLRGA). Residues 241 to 266 (ATLTILLGIFFLCWGPFFLHLTLVVF) traverse the membrane as a helical segment. Topologically, residues 267 to 279 (CPQHLTCSCIFKN) are extracellular. The chain crosses the membrane as a helical span at residues 280–300 (FKVFLTLIICNTIIDPLIYAF). At 301-316 (RSQELRRTLKEVLCSW) the chain is on the cytoplasmic side. The S-palmitoyl cysteine moiety is linked to residue Cys314.

It belongs to the G-protein coupled receptor 1 family. As to quaternary structure, interacts with MGRN1, but does not undergo MGRN1-mediated ubiquitination; this interaction competes with GNAS-binding and thus inhibits agonist-induced cAMP production. Interacts with OPN3; the interaction results in a decrease in MC1R-mediated cAMP signaling and ultimately a decrease in melanin production in melanocytes.

It localises to the cell membrane. Its function is as follows. Receptor for MSH (alpha, beta and gamma) and ACTH. The activity of this receptor is mediated by G proteins which activate adenylate cyclase. Mediates melanogenesis, the production of eumelanin (black/brown) and phaeomelanin (red/yellow), via regulation of cAMP signaling in melanocytes. The polypeptide is Melanocyte-stimulating hormone receptor (MC1R) (Saguinus geoffroyi (Geoffroy's tamarin)).